A 1076-amino-acid chain; its full sequence is Carbamoyl phosphate synthase large chain (1076 aa).

The tract at residues 1-403 (MPKRTDIQSI…SLQKALRGLE (403 aa)) is carboxyphosphate synthetic domain. ATP contacts are provided by arginine 129, arginine 169, glycine 175, glycine 176, glutamate 208, leucine 210, glutamate 215, glycine 241, isoleucine 242, histidine 243, glutamine 285, and glutamate 299. The ATP-grasp 1 domain maps to 133-328 (DKAMKSIGLE…IAKVAAKLAV (196 aa)). The Mg(2+) site is built by glutamine 285, glutamate 299, and asparagine 301. Positions 285, 299, and 301 each coordinate Mn(2+). The oligomerization domain stretch occupies residues 404 to 553 (VGAAGLDEKV…YSTYDEECEA (150 aa)). The carbamoyl phosphate synthetic domain stretch occupies residues 554–935 (NPTDKDKIMV…AYAKAELGCG (382 aa)). The ATP-grasp 2 domain maps to 678–869 (QQAVQRLGLK…LAKIAARVMV (192 aa)). Positions 714, 753, 755, 760, 785, 786, 787, 788, 828, and 840 each coordinate ATP. Residues glutamine 828, glutamate 840, and asparagine 842 each coordinate Mg(2+). Mn(2+) is bound by residues glutamine 828, glutamate 840, and asparagine 842. Positions 936 to 1076 (SVYPEGGRAL…LHARVKANQA (141 aa)) constitute an MGS-like domain. Positions 936-1076 (SVYPEGGRAL…LHARVKANQA (141 aa)) are allosteric domain.

It belongs to the CarB family. Composed of two chains; the small (or glutamine) chain promotes the hydrolysis of glutamine to ammonia, which is used by the large (or ammonia) chain to synthesize carbamoyl phosphate. Tetramer of heterodimers (alpha,beta)4. The cofactor is Mg(2+). Requires Mn(2+) as cofactor.

The catalysed reaction is hydrogencarbonate + L-glutamine + 2 ATP + H2O = carbamoyl phosphate + L-glutamate + 2 ADP + phosphate + 2 H(+). It carries out the reaction hydrogencarbonate + NH4(+) + 2 ATP = carbamoyl phosphate + 2 ADP + phosphate + 2 H(+). Its pathway is amino-acid biosynthesis; L-arginine biosynthesis; carbamoyl phosphate from bicarbonate: step 1/1. It participates in pyrimidine metabolism; UMP biosynthesis via de novo pathway; (S)-dihydroorotate from bicarbonate: step 1/3. Its function is as follows. Large subunit of the glutamine-dependent carbamoyl phosphate synthetase (CPSase). CPSase catalyzes the formation of carbamoyl phosphate from the ammonia moiety of glutamine, carbonate, and phosphate donated by ATP, constituting the first step of 2 biosynthetic pathways, one leading to arginine and/or urea and the other to pyrimidine nucleotides. The large subunit (synthetase) binds the substrates ammonia (free or transferred from glutamine from the small subunit), hydrogencarbonate and ATP and carries out an ATP-coupled ligase reaction, activating hydrogencarbonate by forming carboxy phosphate which reacts with ammonia to form carbamoyl phosphate. This is Carbamoyl phosphate synthase large chain from Vibrio cholerae serotype O1 (strain ATCC 39315 / El Tor Inaba N16961).